Here is a 377-residue protein sequence, read N- to C-terminus: Chaperone protein DnaJ (377 aa).

The J domain maps to 5–69; the sequence is EYYDRLGVSK…QKRAAYDQYG (65 aa). The segment at 133 to 215 adopts a CR-type zinc-finger fold; that stretch reads GTEKEVHYNR…CHGTGHEKQS (83 aa). Positions 146, 149, 163, 166, 189, 192, 203, and 206 each coordinate Zn(2+). CXXCXGXG motif repeat units follow at residues 146-153, 163-170, 189-196, and 203-210; these read CHTCNGSG, CSKCHGSG, CDVCHGTG, and CPTCHGTG.

The protein belongs to the DnaJ family. Homodimer. Requires Zn(2+) as cofactor.

It localises to the cytoplasm. In terms of biological role, participates actively in the response to hyperosmotic and heat shock by preventing the aggregation of stress-denatured proteins and by disaggregating proteins, also in an autonomous, DnaK-independent fashion. Unfolded proteins bind initially to DnaJ; upon interaction with the DnaJ-bound protein, DnaK hydrolyzes its bound ATP, resulting in the formation of a stable complex. GrpE releases ADP from DnaK; ATP binding to DnaK triggers the release of the substrate protein, thus completing the reaction cycle. Several rounds of ATP-dependent interactions between DnaJ, DnaK and GrpE are required for fully efficient folding. Also involved, together with DnaK and GrpE, in the DNA replication of plasmids through activation of initiation proteins. The chain is Chaperone protein DnaJ from Streptococcus mutans serotype c (strain ATCC 700610 / UA159).